A 218-amino-acid polypeptide reads, in one-letter code: Ras-related protein Rab11D (218 aa).

20 to 27 (GDSGVGKS) contacts GTP. The Effector region motif lies at 42–50 (SKSTIGVEF). GTP contacts are provided by residues 68 to 72 (DTAGQ) and 126 to 129 (NKSD). Residues Cys-215 and Cys-216 are each lipidated (S-geranylgeranyl cysteine).

The protein belongs to the small GTPase superfamily. Rab family.

It localises to the cell membrane. The polypeptide is Ras-related protein Rab11D (RAB11D) (Lotus japonicus (Lotus corniculatus var. japonicus)).